The primary structure comprises 1039 residues: FERM domain-containing protein 4A (1039 aa).

Residues 20 to 322 enclose the FERM domain; that stretch reads RRCQVHLLDD…SQHQFYLDRK (303 aa). The tract at residues 358-420 is necessary for interaction with CYTH1; it reads KGKIISGSSG…KLCLREAELT (63 aa). The span at 366 to 382 shows a compositional bias: low complexity; the sequence is SGSLLSSGSQESDSSQS. Positions 366–386 are disordered; it reads SGSLLSSGSQESDSSQSAKKD. Residues 382–416 are a coiled coil; sequence SAKKDMLAALKSRQEALEETLRQRLEELKKLCLRE. Position 530 is a phosphoserine (serine 530). The interval 553–680 is disordered; the sequence is DEDSQVTSTI…MPSTPDLRVR (128 aa). The segment covering 571–586 has biased composition (pro residues); sequence GLPPRPPSHNRPPPPQ. The tract at residues 579–939 is necessary for tight junction and adherens junction localization; Requires for interaction with PARD3; that stretch reads HNRPPPPQSL…QWYQRSTASH (361 aa). Residues serine 604 and serine 615 each carry the phosphoserine modification. The segment covering 623-638 has biased composition (basic residues); that stretch reads VKKRSSHSHSSSHKRF. Residues serine 681 and serine 711 each carry the phosphoserine modification. Disordered regions lie at residues 713 to 756 and 772 to 813; these read ESQG…HSSS and AEDS…AGGA. A compositionally biased stretch (low complexity) spans 788–800; it reads RAAGALGSASSGS. Serine 800, serine 872, and serine 901 each carry phosphoserine. Disordered regions lie at residues 879 to 968 and 980 to 1039; these read FKES…STFV and CKAT…STDE. Polar residues predominate over residues 896-905; sequence LTPSRSQILR. Over residues 912–929 the composition is skewed to basic and acidic residues; it reads EGAHDKGAGRAAVSDELR. The span at 946–966 shows a compositional bias: low complexity; it reads SHTSSTSSDSGSQYSTSSQST. Composition is skewed to polar residues over residues 986 to 1000 and 1013 to 1023; these read ALPQSQRSSTPSSEI and TWQTGEATENS.

As to quaternary structure, interacts (via coiled-coil domain) with CYTH1 (via coiled-coil domain). Interacts with PARD3 (via coiled-coil domain). Found in a complex with PARD3, CYTH1 and FRMD4A. Interacts with CYTH2. Interacts with CYTH3.

It localises to the cytoplasm. The protein localises to the cytoskeleton. The protein resides in the cell junction. It is found in the adherens junction. Its subcellular location is the tight junction. In terms of biological role, scaffolding protein that regulates epithelial cell polarity by connecting ARF6 activation with the PAR3 complex. Plays a redundant role with FRMD4B in epithelial polarization. May regulate MAPT secretion by activating ARF6-signaling. The polypeptide is FERM domain-containing protein 4A (Homo sapiens (Human)).